A 33-amino-acid polypeptide reads, in one-letter code: Photosystem II reaction center protein Psb30 (33 aa).

The helical transmembrane segment at 5-25 (VIAQLTVLALIVISGPLVIAL) threads the bilayer.

Belongs to the Psb30/Ycf12 family. As to quaternary structure, PSII is composed of 1 copy each of membrane proteins PsbA, PsbB, PsbC, PsbD, PsbE, PsbF, PsbH, PsbI, PsbJ, PsbK, PsbL, PsbM, PsbT, PsbX, PsbY, PsbZ, Psb30/Ycf12, peripheral proteins of the oxygen-evolving complex and a large number of cofactors. It forms dimeric complexes.

It localises to the plastid. The protein localises to the chloroplast thylakoid membrane. Functionally, a core subunit of photosystem II (PSII), probably helps stabilize the reaction center. This is Photosystem II reaction center protein Psb30 from Huperzia lucidula (Shining clubmoss).